A 270-amino-acid chain; its full sequence is tRNA pseudouridine synthase A (270 aa).

Asp60 serves as the catalytic Nucleophile. Tyr118 contacts substrate.

The protein belongs to the tRNA pseudouridine synthase TruA family. Homodimer.

It catalyses the reaction uridine(38/39/40) in tRNA = pseudouridine(38/39/40) in tRNA. Its function is as follows. Formation of pseudouridine at positions 38, 39 and 40 in the anticodon stem and loop of transfer RNAs. The chain is tRNA pseudouridine synthase A from Cronobacter sakazakii (strain ATCC BAA-894) (Enterobacter sakazakii).